A 130-amino-acid polypeptide reads, in one-letter code: uncharacterized protein (130 aa).

Asparagine 102 carries an N-linked (GlcNAc...) asparagine glycan. Residues 110 to 130 (DPLAFYLMFLIIITILLIMIL) traverse the membrane as a helical segment.

It is found in the membrane. This is an uncharacterized protein from Dictyostelium discoideum (Social amoeba).